Here is a 307-residue protein sequence, read N- to C-terminus: Homoserine kinase (307 aa).

92-102 is an ATP binding site; it reads PLARGLGSSAT.

This sequence belongs to the GHMP kinase family. Homoserine kinase subfamily.

It localises to the cytoplasm. It catalyses the reaction L-homoserine + ATP = O-phospho-L-homoserine + ADP + H(+). The protein operates within amino-acid biosynthesis; L-threonine biosynthesis; L-threonine from L-aspartate: step 4/5. In terms of biological role, catalyzes the ATP-dependent phosphorylation of L-homoserine to L-homoserine phosphate. This is Homoserine kinase (thrB) from Microchaete diplosiphon (Fremyella diplosiphon).